Consider the following 354-residue polypeptide: Guanine nucleotide-binding protein G(q) subunit alpha (354 aa).

2 S-palmitoyl cysteine lipidation sites follow: cysteine 3 and cysteine 4. Positions arginine 32 to valine 354 constitute a G-alpha domain. The segment at lysine 35–threonine 48 is G1 motif. GTP is bound by residues glycine 40–serine 47, leucine 174–threonine 180, aspartate 199–glutamine 203, asparagine 269–aspartate 272, and alanine 326. Serine 47 and threonine 180 together coordinate Mg(2+). The tract at residues aspartate 172–threonine 180 is G2 motif. A G3 motif region spans residues phenylalanine 195–arginine 204. The interval isoleucine 265 to aspartate 272 is G4 motif. The G5 motif stretch occupies residues threonine 324–threonine 329.

Belongs to the G-alpha family. G(q) subfamily. As to quaternary structure, g proteins are composed of 3 units; alpha, beta and gamma. The alpha chain contains the guanine nucleotide binding site. In terms of tissue distribution, a high concentration was found in the retinal light-sensitive outer segment.

Its function is as follows. Guanine nucleotide-binding proteins (G proteins) are involved as modulators or transducers in various transmembrane signaling systems. Functionally, the G(q) alpha subunit is involved in the light-dependent activation of phospholipase C. This is Guanine nucleotide-binding protein G(q) subunit alpha from Loligo forbesii (Veined squid).